We begin with the raw amino-acid sequence, 514 residues long: 2,3-bisphosphoglycerate-independent phosphoglycerate mutase (514 aa).

2 residues coordinate Mn(2+): Asp-14 and Ser-64. Ser-64 acts as the Phosphoserine intermediate in catalysis. Substrate-binding positions include His-125, 155 to 156 (RD), Arg-187, Arg-193, 263 to 266 (RADR), and Lys-336. Positions 403, 407, 444, 445, and 463 each coordinate Mn(2+).

Belongs to the BPG-independent phosphoglycerate mutase family. As to quaternary structure, monomer. Requires Mn(2+) as cofactor.

The catalysed reaction is (2R)-2-phosphoglycerate = (2R)-3-phosphoglycerate. It participates in carbohydrate degradation; glycolysis; pyruvate from D-glyceraldehyde 3-phosphate: step 3/5. Its function is as follows. Catalyzes the interconversion of 2-phosphoglycerate and 3-phosphoglycerate. The protein is 2,3-bisphosphoglycerate-independent phosphoglycerate mutase of Shewanella pealeana (strain ATCC 700345 / ANG-SQ1).